A 490-amino-acid polypeptide reads, in one-letter code: Probable G-protein coupled receptor npr-8 (490 aa).

Residues 1 to 55 (MEVKDIDNYCDRGISPNASNYLTYPFDGLCLQKFFYQLQTSLRRFTPYEEIIYTT) are Extracellular-facing. N-linked (GlcNAc...) asparagine glycosylation is present at asparagine 17. The helical transmembrane segment at 56–76 (VYIIISVAAVIGNGLVIMAVV) threads the bilayer. Residues 77 to 86 (RKKTMRTNRN) lie on the Cytoplasmic side of the membrane. Residues 87–107 (VLILNLALSNLILAITNIPFL) form a helical membrane-spanning segment. At 108 to 125 (WLPSIDFEFPYSRFFCKF) the chain is on the extracellular side. Residues 126-146 (ANVLPGSNIYCSTLTISVMAI) form a helical membrane-spanning segment. The Cytoplasmic portion of the chain corresponds to 147-166 (DRYYSVKKLKIASNRKQCFH). Residues 167–187 (AVLVSLAIWIVSFILSLPLLL) form a helical membrane-spanning segment. Residues 188–236 (YYETSMLYVMREIRVVDQSGQEVIRSYGWRQCRLVSAGRLPDITQSIQL) lie on the Extracellular side of the membrane. A helical membrane pass occupies residues 237–257 (LMSILQVAFLYIVPLFVLSIF). Over 258–331 (NVKLTRFLKT…QRTNRTTSLL (74 aa)) the chain is Cytoplasmic. The segment at 272-322 (MSKTRAPPKRFDRSDSHHNSLKNNNNHTSSLRSPSMPSIRSSITERNKTNQ) is disordered. The segment covering 280 to 289 (KRFDRSDSHH) has biased composition (basic and acidic residues). Over residues 292-313 (LKNNNNHTSSLRSPSMPSIRSS) the composition is skewed to low complexity. The helical transmembrane segment at 332 to 352 (IAMAGSYAALWFPFTLITFLI) threads the bilayer. The Extracellular segment spans residues 353 to 374 (DFELIINQDYVNLVERIDQTCK). The chain crosses the membrane as a helical span at residues 375–395 (MVSMLSICVNPFLYGFLNTNF). Topologically, residues 396–490 (RHEFSDIYYR…DDDIEKDSFV (95 aa)) are cytoplasmic.

The protein belongs to the G-protein coupled receptor 1 family.

It localises to the cell membrane. Not known. Putative receptor. This Caenorhabditis elegans protein is Probable G-protein coupled receptor npr-8.